The sequence spans 87 residues: Toxin Cll5c (87 aa).

Residues 1–19 form the signal peptide; that stretch reads MNSLLMITACLVLFGTVWA. Residues 20 to 85 enclose the LCN-type CS-alpha/beta domain; sequence KEGYLVNKST…TYPLPNKSCS (66 aa). 4 disulfides stabilise this stretch: C31–C84, C35–C60, C44–C65, and C48–C67. Residues 86–87 constitute a propeptide, removed by a carboxypeptidase; the sequence is KK.

The protein belongs to the long (4 C-C) scorpion toxin superfamily. Sodium channel inhibitor family. Beta subfamily. As to expression, expressed by the venom gland.

Its subcellular location is the secreted. Functionally, beta toxins bind voltage-independently at site-4 of sodium channels (Nav) and shift the voltage of activation toward more negative potentials thereby affecting sodium channel activation and promoting spontaneous and repetitive firing. The polypeptide is Toxin Cll5c (Centruroides limpidus (Mexican scorpion)).